A 221-amino-acid chain; its full sequence is 5'-nucleotidase (221 aa).

The Nucleophile role is filled by aspartate 14.

The protein belongs to the HAD-like hydrolase superfamily. Mn(2+) serves as cofactor. Requires Mg(2+) as cofactor.

It catalyses the reaction a ribonucleoside 5'-phosphate + H2O = a ribonucleoside + phosphate. Its function is as follows. Specifically dephosphorylates nucleoside 5'-monophosphates to nucleosides and inorganic phosphate. Displays high activity toward 5'-UMP and 5'-IMP, significant activity against 5'-XMP and 5'-TMP, and low activity against 5'-CMP. This Pseudomonas aeruginosa (strain ATCC 15692 / DSM 22644 / CIP 104116 / JCM 14847 / LMG 12228 / 1C / PRS 101 / PAO1) protein is 5'-nucleotidase.